A 427-amino-acid polypeptide reads, in one-letter code: UDP-N-acetylglucosamine 1-carboxyvinyltransferase 2 (427 aa).

Residue 19–20 (KN) coordinates phosphoenolpyruvate. Arg-91 serves as a coordination point for UDP-N-acetyl-alpha-D-glucosamine. Cys-115 acts as the Proton donor in catalysis. Cys-115 bears the 2-(S-cysteinyl)pyruvic acid O-phosphothioketal mark. Positions 307 and 329 each coordinate UDP-N-acetyl-alpha-D-glucosamine.

This sequence belongs to the EPSP synthase family. MurA subfamily.

The protein localises to the cytoplasm. The enzyme catalyses phosphoenolpyruvate + UDP-N-acetyl-alpha-D-glucosamine = UDP-N-acetyl-3-O-(1-carboxyvinyl)-alpha-D-glucosamine + phosphate. Its pathway is cell wall biogenesis; peptidoglycan biosynthesis. Functionally, cell wall formation. Adds enolpyruvyl to UDP-N-acetylglucosamine. In Prochlorococcus marinus (strain SARG / CCMP1375 / SS120), this protein is UDP-N-acetylglucosamine 1-carboxyvinyltransferase 2.